The primary structure comprises 591 residues: Serine/threonine-protein kinase Nek2 (591 aa).

The 255-residue stretch at 4-258 folds into the Protein kinase domain; it reads YEVLEQIGKG…AAQLLKHPQL (255 aa). ATP-binding positions include 10–18 and lysine 33; that span reads IGKGAFGSA. Residue aspartate 129 is the Proton acceptor of the active site. Disordered stretches follow at residues 309-331, 382-408, and 500-534; these read LGNE…SSTR, ARNQ…TTPN, and RTDG…DTSS. 2 stretches are compositionally biased toward polar residues: residues 391–408 and 504–534; these read TSYN…TTPN and DNGS…DTSS.

This sequence belongs to the protein kinase superfamily. NEK Ser/Thr protein kinase family. NIMA subfamily. As to expression, expressed in anthers, pistils and leaves.

The catalysed reaction is L-seryl-[protein] + ATP = O-phospho-L-seryl-[protein] + ADP + H(+). It catalyses the reaction L-threonyl-[protein] + ATP = O-phospho-L-threonyl-[protein] + ADP + H(+). May be involved in plant development processes. The sequence is that of Serine/threonine-protein kinase Nek2 from Oryza sativa subsp. japonica (Rice).